Here is a 293-residue protein sequence, read N- to C-terminus: Ribosomal protein L11 methyltransferase (293 aa).

Positions 145, 166, 188, and 230 each coordinate S-adenosyl-L-methionine.

Belongs to the methyltransferase superfamily. PrmA family.

The protein resides in the cytoplasm. The enzyme catalyses L-lysyl-[protein] + 3 S-adenosyl-L-methionine = N(6),N(6),N(6)-trimethyl-L-lysyl-[protein] + 3 S-adenosyl-L-homocysteine + 3 H(+). Its function is as follows. Methylates ribosomal protein L11. In Enterobacter sp. (strain 638), this protein is Ribosomal protein L11 methyltransferase.